The primary structure comprises 688 residues: Elongation factor G (688 aa).

Residues 8–282 enclose the tr-type G domain; it reads DKFRNFGIMA…GVVDYLPSPL (275 aa). GTP-binding positions include 17-24, 81-85, and 135-138; these read AHIDAGKT, DTPGH, and NKMD.

Belongs to the TRAFAC class translation factor GTPase superfamily. Classic translation factor GTPase family. EF-G/EF-2 subfamily.

It localises to the cytoplasm. Catalyzes the GTP-dependent ribosomal translocation step during translation elongation. During this step, the ribosome changes from the pre-translocational (PRE) to the post-translocational (POST) state as the newly formed A-site-bound peptidyl-tRNA and P-site-bound deacylated tRNA move to the P and E sites, respectively. Catalyzes the coordinated movement of the two tRNA molecules, the mRNA and conformational changes in the ribosome. In Clostridium botulinum (strain Eklund 17B / Type B), this protein is Elongation factor G.